A 47-amino-acid chain; its full sequence is Large ribosomal subunit protein bL33C (47 aa).

It belongs to the bacterial ribosomal protein bL33 family.

The sequence is that of Large ribosomal subunit protein bL33C from Staphylococcus aureus (strain MRSA252).